Here is a 265-residue protein sequence, read N- to C-terminus: tRNA (guanine-N(1)-)-methyltransferase (265 aa).

Residues Gly119 and 139 to 144 contribute to the S-adenosyl-L-methionine site; that span reads IGDYVL.

The protein belongs to the RNA methyltransferase TrmD family. As to quaternary structure, homodimer.

It localises to the cytoplasm. It catalyses the reaction guanosine(37) in tRNA + S-adenosyl-L-methionine = N(1)-methylguanosine(37) in tRNA + S-adenosyl-L-homocysteine + H(+). In terms of biological role, specifically methylates guanosine-37 in various tRNAs. This Alcanivorax borkumensis (strain ATCC 700651 / DSM 11573 / NCIMB 13689 / SK2) protein is tRNA (guanine-N(1)-)-methyltransferase.